The following is a 259-amino-acid chain: Proteasome subunit alpha type-7 (259 aa).

This sequence belongs to the peptidase T1A family. The 26S proteasome consists of a 20S proteasome core and two 19S regulatory subunits. The 20S proteasome core is composed of 28 subunits that are arranged in four stacked rings, resulting in a barrel-shaped structure. The two end rings are each formed by seven alpha subunits, and the two central rings are each formed by seven beta subunits. The catalytic chamber with the active sites is on the inside of the barrel.

It localises to the cytoplasm. The protein localises to the nucleus. Functionally, the proteasome is a multicatalytic proteinase complex which is characterized by its ability to cleave peptides with Arg, Phe, Tyr, Leu, and Glu adjacent to the leaving group at neutral or slightly basic pH. The proteasome has an ATP-dependent proteolytic activity. In Solanum lycopersicum (Tomato), this protein is Proteasome subunit alpha type-7 (PAD1).